We begin with the raw amino-acid sequence, 362 residues long: Trans-enoyl reductase phm4 (362 aa).

50-53 contributes to the NADP(+) binding site; that stretch reads VDAK. 136–143 contacts substrate; that stretch reads TCFMTCGL. Residues 171–174, 194–197, Tyr212, and 259–260 contribute to the NADP(+) site; these read ATAT, SPHS, and LD. A substrate-binding site is contributed by 280 to 284; the sequence is GPIML. An NADP(+)-binding site is contributed by 349–350; the sequence is VN.

It belongs to the zinc-containing alcohol dehydrogenase family. Monomer.

The protein operates within secondary metabolite biosynthesis. Its function is as follows. Trans-enoyl reductase; part of the gene cluster that mediates the biosynthesis of the trans-fused decalin-containing tetramic acid phomasetin, the stereochemical opposite of the HIV-1 integrase inhibitor equisetin. The PKS module of phm1 together with the enoylreductase phm4 catalyze the formation of the polyketide unit which is then conjugated to L-serine by the condensation domain of the phm1 NRPS module. Activity of the Dieckmann cyclase domain (RED) of phm1 results in release of the Dieckmann product intermediate. The Diels-Alderase phm7 then uses the Dieckmann product of phm1 as substrate and catalyzes the Diels-Alder cycloaddition to form the decalin ring of N-desmethylphomasetin. N-desmethylphomasetin is further methylated to phomasetin by the methyltransferase phm5. This is Trans-enoyl reductase phm4 from Pyrenochaetopsis sp.